The sequence spans 282 residues: Probable endonuclease 4 (282 aa).

Residues His66, His106, Glu143, Asp176, His179, His213, Asp226, His228, and Glu258 each contribute to the Zn(2+) site.

It belongs to the AP endonuclease 2 family. It depends on Zn(2+) as a cofactor.

It carries out the reaction Endonucleolytic cleavage to 5'-phosphooligonucleotide end-products.. Functionally, endonuclease IV plays a role in DNA repair. It cleaves phosphodiester bonds at apurinic or apyrimidinic (AP) sites, generating a 3'-hydroxyl group and a 5'-terminal sugar phosphate. The protein is Probable endonuclease 4 of Aquifex aeolicus (strain VF5).